Reading from the N-terminus, the 104-residue chain is Transcription and mRNA export factor ENY2 (104 aa).

Positions 1 to 14 are enriched in basic and acidic residues; it reads MADYGSDKKSRDNQ. Positions 1-22 are disordered; that stretch reads MADYGSDKKSRDNQMRSAINQQ.

Belongs to the ENY2 family. Component of the nuclear pore complex (NPC)-associated TREX-2 complex (transcription and export complex 2). Component of the SAGA transcription coactivator-HAT complex. Within the SAGA complex, participates in a subcomplex of SAGA called the DUB module (deubiquitination module).

It localises to the nucleus. The protein resides in the nucleoplasm. Functionally, involved in mRNA export coupled transcription activation by association with both the TREX-2 and the SAGA complexes. The transcription regulatory histone acetylation (HAT) complex SAGA is a multiprotein complex that activates transcription by remodeling chromatin and mediating histone acetylation and deubiquitination. Within the SAGA complex, participates in a subcomplex that specifically deubiquitinates histones. The SAGA complex is recruited to specific gene promoters by activators, where it is required for transcription. The TREX-2 complex functions in docking export-competent ribonucleoprotein particles (mRNPs) to the nuclear entrance of the nuclear pore complex (nuclear basket). TREX-2 participates in mRNA export and accurate chromatin positioning in the nucleus by tethering genes to the nuclear periphery. This is Transcription and mRNA export factor ENY2 from Ciona intestinalis (Transparent sea squirt).